The sequence spans 277 residues: Thymidylate synthase (277 aa).

R21 contacts dUMP. Residue H51 coordinates (6R)-5,10-methylene-5,6,7,8-tetrahydrofolate. Residue 126–127 (RR) participates in dUMP binding. C159 (nucleophile) is an active-site residue. Residues 179-182 (RSAD), N190, and 220-222 (HLY) each bind dUMP. Residue D182 coordinates (6R)-5,10-methylene-5,6,7,8-tetrahydrofolate. Position 276 (S276) interacts with (6R)-5,10-methylene-5,6,7,8-tetrahydrofolate.

This sequence belongs to the thymidylate synthase family. Bacterial-type ThyA subfamily. Homodimer.

The protein localises to the cytoplasm. It catalyses the reaction dUMP + (6R)-5,10-methylene-5,6,7,8-tetrahydrofolate = 7,8-dihydrofolate + dTMP. Its pathway is pyrimidine metabolism; dTTP biosynthesis. Its function is as follows. Catalyzes the reductive methylation of 2'-deoxyuridine-5'-monophosphate (dUMP) to 2'-deoxythymidine-5'-monophosphate (dTMP) while utilizing 5,10-methylenetetrahydrofolate (mTHF) as the methyl donor and reductant in the reaction, yielding dihydrofolate (DHF) as a by-product. This enzymatic reaction provides an intracellular de novo source of dTMP, an essential precursor for DNA biosynthesis. The chain is Thymidylate synthase from Teredinibacter turnerae (strain ATCC 39867 / T7901).